The chain runs to 160 residues: Cytochrome c-type biogenesis protein CcmE (160 aa).

At 1 to 8 (MNPRRKQR) the chain is on the cytoplasmic side. A helical; Signal-anchor for type II membrane protein membrane pass occupies residues 9–29 (LTWVAILVIGVSVATGLMLYA). At 30-160 (LSQSIDLFYT…PNTVEKGEGQ (131 aa)) the chain is on the periplasmic side. H130 and Y134 together coordinate heme.

This sequence belongs to the CcmE/CycJ family.

It localises to the cell inner membrane. In terms of biological role, heme chaperone required for the biogenesis of c-type cytochromes. Transiently binds heme delivered by CcmC and transfers the heme to apo-cytochromes in a process facilitated by CcmF and CcmH. The protein is Cytochrome c-type biogenesis protein CcmE of Idiomarina loihiensis (strain ATCC BAA-735 / DSM 15497 / L2-TR).